The primary structure comprises 468 residues: Argininosuccinate lyase (468 aa).

It belongs to the lyase 1 family. Argininosuccinate lyase subfamily.

It is found in the cytoplasm. It carries out the reaction 2-(N(omega)-L-arginino)succinate = fumarate + L-arginine. Its pathway is amino-acid biosynthesis; L-arginine biosynthesis; L-arginine from L-ornithine and carbamoyl phosphate: step 3/3. The sequence is that of Argininosuccinate lyase from Zymomonas mobilis subsp. mobilis (strain ATCC 31821 / ZM4 / CP4).